We begin with the raw amino-acid sequence, 306 residues long: D-alanine--D-alanine ligase (306 aa).

Catalysis depends on residues glutamate 18 and serine 150. The 200-residue stretch at 104–303 (KMLWKAFGLP…FEQLVVKILE (200 aa)) folds into the ATP-grasp domain. Residue 134-189 (VAKLGLPLMVKPSLEGSSVGLTKVKAVEELKSAVEYALKFDNTILIEEWLAGDELT) coordinates ATP. Mg(2+)-binding residues include aspartate 257, glutamate 270, and asparagine 272. Serine 281 is an active-site residue.

Belongs to the D-alanine--D-alanine ligase family. The cofactor is Mg(2+). Mn(2+) serves as cofactor.

Its subcellular location is the cytoplasm. It carries out the reaction 2 D-alanine + ATP = D-alanyl-D-alanine + ADP + phosphate + H(+). Its pathway is cell wall biogenesis; peptidoglycan biosynthesis. Cell wall formation. This chain is D-alanine--D-alanine ligase, found in Haemophilus influenzae (strain ATCC 51907 / DSM 11121 / KW20 / Rd).